Here is a 70-residue protein sequence, read N- to C-terminus: Large ribosomal subunit protein eL38 (70 aa).

This sequence belongs to the eukaryotic ribosomal protein eL38 family.

This is Large ribosomal subunit protein eL38 (rpl-38) from Ostertagia ostertagi (Brown stomach worm).